Consider the following 88-residue polypeptide: Small ribosomal subunit protein bS18 (88 aa).

The tract at residues 1-22 (MSTKNAKPKKEAQRRPSRKAKV) is disordered.

The protein belongs to the bacterial ribosomal protein bS18 family. As to quaternary structure, part of the 30S ribosomal subunit. Forms a tight heterodimer with protein bS6.

Functionally, binds as a heterodimer with protein bS6 to the central domain of the 16S rRNA, where it helps stabilize the platform of the 30S subunit. This Thermus thermophilus protein is Small ribosomal subunit protein bS18 (rpsR).